A 620-amino-acid polypeptide reads, in one-letter code: Sorbicillinoid biosynthetic cluster transcription factor 1 (620 aa).

The segment at residues 10–37 is a DNA-binding region (zn(2)-C6 fungal-type); sequence CEECRRRKARCDRVRPQCGICADAGRTC. The disordered stretch occupies residues 285 to 308; the sequence is HDDETSPNENSGSCPSVSPSTTQN. The span at 291 to 308 shows a compositional bias: polar residues; sequence PNENSGSCPSVSPSTTQN.

The protein localises to the nucleus. Functionally, transcription factor that acts as the main regulator of the gene cluster that mediates the biosynthesis of sorbicillinoids, a diverse group of yellow secondary metabolites that restrict growth of competing pathogenic fungi but not of bacteria. The sequence is that of Sorbicillinoid biosynthetic cluster transcription factor 1 from Penicillium rubens (strain ATCC 28089 / DSM 1075 / NRRL 1951 / Wisconsin 54-1255) (Penicillium chrysogenum).